Consider the following 202-residue polypeptide: Ribonuclease HII (202 aa).

The 185-residue stretch at 18-202 (TYICGVDEAG…FAPVAKLLKQ (185 aa)) folds into the RNase H type-2 domain. D24, E25, and D116 together coordinate a divalent metal cation.

Belongs to the RNase HII family. Requires Mn(2+) as cofactor. Mg(2+) is required as a cofactor.

The protein localises to the cytoplasm. The catalysed reaction is Endonucleolytic cleavage to 5'-phosphomonoester.. Its function is as follows. Endonuclease that specifically degrades the RNA of RNA-DNA hybrids. The sequence is that of Ribonuclease HII from Acholeplasma laidlawii (strain PG-8A).